A 249-amino-acid chain; its full sequence is Ubiquinone biosynthesis protein COQ4 homolog, mitochondrial (249 aa).

Residues H134, D135, H138, and E150 each coordinate Zn(2+).

Belongs to the COQ4 family. In terms of assembly, component of a multi-subunit COQ enzyme complex. It depends on Zn(2+) as a cofactor.

It is found in the mitochondrion inner membrane. It carries out the reaction a 4-hydroxy-3-methoxy-5-(all-trans-polyprenyl)benzoate + H(+) = a 2-methoxy-6-(all-trans-polyprenyl)phenol + CO2. The protein operates within cofactor biosynthesis; ubiquinone biosynthesis. Functionally, lyase that catalyzes the C1-decarboxylation of 4-hydroxy-3-methoxy-5-(all-trans-polyprenyl)benzoic acid into 2-methoxy-6-(all-trans-polyprenyl)phenol during ubiquinone biosynthesis. In Trypanosoma brucei brucei (strain 927/4 GUTat10.1), this protein is Ubiquinone biosynthesis protein COQ4 homolog, mitochondrial.